The primary structure comprises 325 residues: Glycerol-3-phosphate dehydrogenase [NAD(P)+] (325 aa).

NADPH contacts are provided by tryptophan 15, arginine 35, and lysine 107. Sn-glycerol 3-phosphate is bound by residues lysine 107, glycine 135, and serine 137. Position 139 (alanine 139) interacts with NADPH. Lysine 190, aspartate 243, serine 253, arginine 254, and asparagine 255 together coordinate sn-glycerol 3-phosphate. The active-site Proton acceptor is lysine 190. Arginine 254 serves as a coordination point for NADPH. NADPH contacts are provided by leucine 272 and glutamate 274.

Belongs to the NAD-dependent glycerol-3-phosphate dehydrogenase family.

The protein resides in the cytoplasm. It catalyses the reaction sn-glycerol 3-phosphate + NAD(+) = dihydroxyacetone phosphate + NADH + H(+). The catalysed reaction is sn-glycerol 3-phosphate + NADP(+) = dihydroxyacetone phosphate + NADPH + H(+). The protein operates within membrane lipid metabolism; glycerophospholipid metabolism. Functionally, catalyzes the reduction of the glycolytic intermediate dihydroxyacetone phosphate (DHAP) to sn-glycerol 3-phosphate (G3P), the key precursor for phospholipid synthesis. The polypeptide is Glycerol-3-phosphate dehydrogenase [NAD(P)+] (Afipia carboxidovorans (strain ATCC 49405 / DSM 1227 / KCTC 32145 / OM5) (Oligotropha carboxidovorans)).